The chain runs to 701 residues: Arachidonate 12-lipoxygenase, 12R-type (701 aa).

Residues 2–119 enclose the PLAT domain; it reads ATYKVKVATG…TLALREATGK (118 aa). The Lipoxygenase domain maps to 120–701; it reads ITADDTLPIL…PVLIENSISI (582 aa). Fe cation-binding residues include His-398, His-403, His-578, Asn-582, and Ile-701.

This sequence belongs to the lipoxygenase family. It depends on Fe cation as a cofactor. As to expression, expressed in skin epidermis and other stratified epithelia including tongue and forestomach. Low levels of expression are found in trachea, brain and lung. Not expressed in intestine, liver, kidney, adipose tissue, muscle or hematopoietic cells.

Its subcellular location is the cytoplasm. The protein resides in the perinuclear region. The catalysed reaction is 1-O-methyl-(5Z,8Z,11Z,14Z)-eicosatetraenoate + O2 = 1-O-methyl (5Z,8Z,10E,12R,14Z)-hydroperoxyiecosatetraenoate. The enzyme catalyses 1-O-methyl-(5Z,8Z,11Z,14Z)-eicosatetraenoate + O2 = 1-O-methyl-8-hydroperoxy-(5Z,9E,11Z,14Z)-eicosatetraenoate. It catalyses the reaction (5Z,8Z,11Z,14Z)-eicosatetraenoate + O2 = (12R)-hydroperoxy-(5Z,8Z,10E,14Z)-eicosatetraenoate. It carries out the reaction N-[omega-(9Z,12Z)-octadecadienoyloxy]acyl-beta-D-glucosyl-(1&lt;-&gt;1)-octadecasphing-4E-enine + O2 = N-[omega-(9R)-hydroperoxy-(10E,12Z)-octadecadienoyloxy]acyl-beta-D-glucosyl-(1&lt;-&gt;1)-octadecasphing-4E-enine. The catalysed reaction is a N-[omega-(9Z,12Z)-octadecadienoyloxy]-acylsphin-4E-enine + O2 = a N-[omega-(9R)-hydroperoxy-(10E,12Z)-octadecadienoyloxy]-acylsphin-4E-enine. The enzyme catalyses (6Z,9Z,12Z)-octadecatrienoate + O2 = 10-hydroperoxy-(6Z,8E,12Z)-octadecatrienoate. It catalyses the reaction (4Z,7Z,10Z,13Z,16Z,19Z)-docosahexaenoate + O2 = 14-hydroperoxy-(4Z,7Z,10Z,12E,16Z,19Z)-docosahexaenoate. It carries out the reaction (8Z,11Z,14Z)-eicosatrienoate + O2 = (8Z,10E,14Z)-12-hydroperoxyeicosatrienoate. The catalysed reaction is (5Z,8Z,11Z,14Z,17Z)-eicosapentaenoate + O2 = (5Z,7Z,8Z,10E,14Z,17Z)-12-hydroperoxyeicosapentaenoate. The enzyme catalyses (6Z,9Z,12Z)-octadecatrienoate + O2 = 10R-hydroperoxy-(6Z,8E,12Z)-octadecatrienoate. It catalyses the reaction 1-O-methyl-(5Z,8Z,11Z,14Z)-eicosatetraenoate + O2 = 1-O-methyl-(8R)-hydroperoxy-(5Z,9E,11Z,14Z)-eicosatrienoate. It carries out the reaction 1-O-methyl-(9Z,12Z)-octadecadienoate + O2 = 1-O-methyl-(9R)-hydroperoxy-(10E,12Z)-octadecadienoate. The catalysed reaction is 1-O-methyl-20-hydroxy-(5Z,8Z,11Z,14Z)-eicosatetraenoate + O2 = 1-O-methyl-8-hydroperoxy-20-hydroxy-(5Z,9E,11Z,14Z)-eicosatetraenoate. The enzyme catalyses 1-O-methyl-20-hydroxy-(5Z,8Z,11Z,14Z)-eicosatetraenoate + O2 = 1-O-methyl-12-hydroperoxy-20-hydroxy-(5Z,8Z,10E,14Z)-eicosatetraenoate. It catalyses the reaction 1-O-methyl-20-hydroxy-(5Z,8Z,11Z,14Z)-eicosatetraenoate + O2 = 1-O-methyl-9-hydroperoxy-20-hydroxy-(5Z,7E,11Z,14Z)-eicosatetraenoate. It carries out the reaction 1-O-methyl-(9Z,12Z)-octadecadienoate + O2 = 1-O-methyl-(13S)-hydroperoxy-(9Z,11E)-octadecadienoate. Its pathway is lipid metabolism; hydroperoxy eicosatetraenoic acid biosynthesis. It functions in the pathway lipid metabolism; sphingolipid metabolism. With respect to regulation, increased by calcium. Catalyzes the regio and stereo-specific incorporation of a single molecule of dioxygen into free and esterified polyunsaturated fatty acids generating lipid hydroperoxides that can be further reduced to the corresponding hydroxy species. Does not convert arachidonic acid to (12R)-hydroperoxyeicosatetraenoic acid/(12R)-HPETE. In the skin, acts upstream of ALOXE3 on the lineolate moiety of esterified omega-hydroxyacyl-sphingosine (EOS) ceramides to produce an epoxy-ketone derivative, a crucial step in the conjugation of omega-hydroxyceramide to membrane proteins. Therefore plays a crucial role in the synthesis of corneocytes lipid envelope and the establishment of the skin barrier to water loss. May also play a role in the regulation of the expression of airway mucins. The polypeptide is Arachidonate 12-lipoxygenase, 12R-type (Mus musculus (Mouse)).